The primary structure comprises 67 residues: MAFLKKSLFLVFFLGFVSLSICEEEKRETDEKENEQEDDREERSEEKRLLGMIPVAITAISALSKLG.

The N-terminal stretch at 1 to 22 (MAFLKKSLFLVFFLGFVSLSIC) is a signal peptide. A propeptide spanning residues 23 to 48 (EEEKRETDEKENEQEDDREERSEEKR) is cleaved from the precursor. The segment at 25-46 (EKRETDEKENEQEDDREERSEE) is disordered. Positions 31–40 (EKENEQEDDR) are enriched in acidic residues. The residue at position 66 (Leu66) is a Leucine amide.

Belongs to the frog skin active peptide (FSAP) family. Medusin subfamily. In terms of processing, in the synthetic mutant medusin-PT1a [T58K], the Leu-50 has been modified in a D-amino acid. In medusin-PT1a, there is an increase in antimicrobial activity, and an increase in hemolytic activity. It is more potent against S.aureus and gains activity against MRSA, E.faecalis, E.coli, P.aeruginosa and C.albicans. There is an important increase in both biofilm inhibition and biofilm eradication. In terms of tissue distribution, expressed by the skin glands.

The protein resides in the secreted. Its subcellular location is the target cell membrane. Functionally, antimicrobial peptide with activity against Gram-positive bacteria S.epidermidis ATCC 12228 (MIC=50 uM) and S.aureus (MIC=64 ug/ml and MBC=128 ug/ml). Not active against some Gram-positive bacteria (methicillin-resistant S.aureus (MRSA), E.faecalis), Gram-negative bacterium E.coli ATCC 25922 and fungus C.albicans at concentrations up to 100 uM. Can only slightly inhibit the formation of biofilm by S.aureus (minimal biofilm inhibitionconcentration MBIC=512 ug/ml, minimal biofilm eradication concentration MBEC&gt;512 ug/ml). Has an anti-inflammatory effect, since it inhibits the production of the pro-inflammatory cytokines TNF-alpha and IL-1beta. Has high activity of stimulation of insulin release, which may protect the species from being eaten by predators by causing fatal hypoglycemia. Is not cytotoxic to cancer line cells. Shows very low hemolysis on horse erythrocytes and moderate hemolysis on mouse erythrocytes. The polypeptide is Medusin-PT (Phyllomedusa tarsius (Brownbelly leaf frog)).